The following is a 37-amino-acid chain: MKVRASVKPICEKCKVIKRKGVLRIICDNLKHKQRQK.

Belongs to the bacterial ribosomal protein bL36 family.

The sequence is that of Large ribosomal subunit protein bL36 from Borreliella afzelii (strain PKo) (Borrelia afzelii).